A 380-amino-acid polypeptide reads, in one-letter code: Cytochrome b (380 aa).

The next 4 helical transmembrane spans lie at 34-54 (FGSLLGMCLIIQILTGLFLAM), 78-99 (WLIRNIHANGASMFFICVYLHI), 114-134 (WNIGVVILLLLMVTAFVGYVL), and 179-199 (FFTFHFLFPFVTAALTMIHLL). Residues histidine 84 and histidine 98 each contribute to the heme b site. Heme b-binding residues include histidine 183 and histidine 197. Histidine 202 contacts a ubiquinone. 4 helical membrane-spanning segments follow: residues 227 to 247 (YKDLVGFFILLFLLTLLALFT), 289 to 309 (LGGVLALVFSILILLLVPILH), 321 to 341 (ITQILFWLLVTNTIILTWIGG), and 348 to 368 (FITIGQIASITYFSFFLILFP).

The protein belongs to the cytochrome b family. In terms of assembly, the cytochrome bc1 complex contains 3 respiratory subunits (MT-CYB, CYC1 and UQCRFS1), 2 core proteins (UQCRC1 and UQCRC2) and probably 6 low-molecular weight proteins. Heme b is required as a cofactor.

It localises to the mitochondrion inner membrane. Functionally, component of the ubiquinol-cytochrome c reductase complex (complex III or cytochrome b-c1 complex) that is part of the mitochondrial respiratory chain. The b-c1 complex mediates electron transfer from ubiquinol to cytochrome c. Contributes to the generation of a proton gradient across the mitochondrial membrane that is then used for ATP synthesis. This Hemitrygon laosensis (Mekong freshwater stingray) protein is Cytochrome b (mt-cyb).